Consider the following 307-residue polypeptide: Aspartate carbamoyltransferase catalytic subunit (307 aa).

Arg55 and Thr56 together coordinate carbamoyl phosphate. Lys85 is an L-aspartate binding site. Carbamoyl phosphate is bound by residues Arg106, His135, and Gln138. L-aspartate contacts are provided by Arg168 and Arg230. 2 residues coordinate carbamoyl phosphate: Leu268 and Pro269.

This sequence belongs to the aspartate/ornithine carbamoyltransferase superfamily. ATCase family. Heterododecamer (2C3:3R2) of six catalytic PyrB chains organized as two trimers (C3), and six regulatory PyrI chains organized as three dimers (R2).

The enzyme catalyses carbamoyl phosphate + L-aspartate = N-carbamoyl-L-aspartate + phosphate + H(+). Its pathway is pyrimidine metabolism; UMP biosynthesis via de novo pathway; (S)-dihydroorotate from bicarbonate: step 2/3. Catalyzes the condensation of carbamoyl phosphate and aspartate to form carbamoyl aspartate and inorganic phosphate, the committed step in the de novo pyrimidine nucleotide biosynthesis pathway. The polypeptide is Aspartate carbamoyltransferase catalytic subunit (Photorhabdus laumondii subsp. laumondii (strain DSM 15139 / CIP 105565 / TT01) (Photorhabdus luminescens subsp. laumondii)).